Here is a 139-residue protein sequence, read N- to C-terminus: Succinate dehydrogenase assembly factor 2, mitochondrial (139 aa).

A mitochondrion-targeting transit peptide spans 1 to 28 (MLRKTNLSNITTLLRSARCMNRMPQLRF).

It belongs to the SDHAF2 family. As to quaternary structure, interacts with the flavoprotein subunit within the SDH catalytic dimer.

It localises to the mitochondrion. The protein resides in the mitochondrion matrix. Plays an essential role in the assembly of succinate dehydrogenase (SDH), an enzyme complex (also referred to as respiratory complex II) that is a component of both the tricarboxylic acid (TCA) cycle and the mitochondrial electron transport chain, and which couples the oxidation of succinate to fumarate with the reduction of ubiquinone (coenzyme Q) to ubiquinol. Required for flavinylation (covalent attachment of FAD) of the flavoprotein subunit of the SDH catalytic dimer. This Schizosaccharomyces pombe (strain 972 / ATCC 24843) (Fission yeast) protein is Succinate dehydrogenase assembly factor 2, mitochondrial.